A 388-amino-acid polypeptide reads, in one-letter code: Succinate--CoA ligase [ADP-forming] subunit beta (388 aa).

Positions 9–244 (KQLFAEYGLP…PSQDDPREAH (236 aa)) constitute an ATP-grasp domain. ATP-binding positions include Lys-46, 53 to 55 (GRG), Glu-99, Thr-102, and Glu-107. Residues Asn-199 and Asp-213 each coordinate Mg(2+). Substrate is bound by residues Asn-264 and 321 to 323 (GIV).

Belongs to the succinate/malate CoA ligase beta subunit family. As to quaternary structure, heterotetramer of two alpha and two beta subunits. Mg(2+) serves as cofactor.

The enzyme catalyses succinate + ATP + CoA = succinyl-CoA + ADP + phosphate. It catalyses the reaction GTP + succinate + CoA = succinyl-CoA + GDP + phosphate. It functions in the pathway carbohydrate metabolism; tricarboxylic acid cycle; succinate from succinyl-CoA (ligase route): step 1/1. Functionally, succinyl-CoA synthetase functions in the citric acid cycle (TCA), coupling the hydrolysis of succinyl-CoA to the synthesis of either ATP or GTP and thus represents the only step of substrate-level phosphorylation in the TCA. The beta subunit provides nucleotide specificity of the enzyme and binds the substrate succinate, while the binding sites for coenzyme A and phosphate are found in the alpha subunit. The chain is Succinate--CoA ligase [ADP-forming] subunit beta from Pseudomonas fluorescens (strain Pf0-1).